We begin with the raw amino-acid sequence, 449 residues long: Kynurenine 3-monooxygenase (449 aa).

It belongs to the aromatic-ring hydroxylase family. KMO subfamily. The cofactor is FAD.

The enzyme catalyses L-kynurenine + NADPH + O2 + H(+) = 3-hydroxy-L-kynurenine + NADP(+) + H2O. It participates in cofactor biosynthesis; NAD(+) biosynthesis; quinolinate from L-kynurenine: step 1/3. Catalyzes the hydroxylation of L-kynurenine (L-Kyn) to form 3-hydroxy-L-kynurenine (L-3OHKyn). Required for synthesis of quinolinic acid. In Legionella pneumophila (strain Lens), this protein is Kynurenine 3-monooxygenase.